We begin with the raw amino-acid sequence, 577 residues long: Insulin-like growth factor 2 mRNA-binding protein 1 (577 aa).

2 RRM domains span residues 2 to 75 (NKLY…HSVP) and 81 to 156 (RKIQ…YIPD). Residues serine 12 and serine 73 each carry the phosphoserine modification. Positions 160–190 (AQGPENGRRGGFGSRGQPRQGSPVAAGAPAK) are disordered. The residue at position 181 (serine 181) is a Phosphoserine. 4 consecutive KH domains span residues 195–260 (DIPL…CKMI), 276–343 (EVPL…EQEI), 405–470 (QEMV…QGRI), and 487–553 (KLET…QRKI). Residues 310 to 324 (ITISSLQDLTLYNPE) are sufficient for nuclear export. The interval 485–495 (EVKLETHIRVP) is sufficient for nuclear export. The residue at position 528 (threonine 528) is a Phosphothreonine.

This sequence belongs to the RRM IMP/VICKZ family. Can form homodimers and heterodimers with IGF2BP1 and IGF2BP3. Component of the coding region determinant (CRD)-mediated complex, composed of DHX9, HNRNPU, IGF2BP1, SYNCRIP and YBX1. During HCV infection, identified in a HCV IRES-mediated translation complex, at least composed of EIF3C, IGF2BP1, RPS3 and HCV RNA-replicon. Interacts (via the KH domains) with HIV-1 GAG (via the second zinc finger motif of NC). Associates (via the RRM domains and KH domains) with HIV-1 particles. Identified in a mRNP complex, composed of at least DHX9, DDX3X, ELAVL1, HNRNPU, IGF2BP1, ILF3, PABPC1, PCBP2, PTBP2, STAU1, STAU2, SYNCRIP and YBX1. Identified in a IGF2BP1-dependent mRNP granule complex containing untranslated mRNAs. Interacts with DHX9, ELAVL2, HNRNPA2B1, HNRNPC, HNRNPH1, HNRNPU, IGF2BP2, ILF2, and YBX1. Interacts with FMR1. Component of a multisubunit autoregulatory RNP complex (ARC), at least composed of IGF2BP1, PABPC1 and CSDE1/UNR. Directly interacts with PABPC1. Component of a TAU mRNP complex, at least composed of IGF2BP1, ELAVL4 and G3BP. Interacts with ELAVL4 in an RNA-dependent manner. Associates with microtubules and polysomes. Interacts with AGO1 and AGO2. Interacts with ELAVL1 and MATR3. Interacts (via KH3 and KH4 domains) with SEPIN14P20 peptide RBRP; the interaction results in increased binding of IGF2BP1 to N6-methyladenosine (m6A)-containing mRNAs. Post-translationally, phosphorylated at Ser-181 by mTORC2 cotranslationally, promoting binding to the 3'-UTR of IGF2 mRNA. In terms of tissue distribution, mainly expressed in the embryo, including in fetal liver, fetal lung, fetal kidney, fetal thymus (at protein level). Also expressed follicles of ovary, as well as in gonocytes of testis, spermatogonia, semen, oocytes and placenta (at protein level). Expressed in various cancers, including testis and lung cancers (at protein level), as well as kidney, prostate and trachea cancers.

Its subcellular location is the nucleus. The protein resides in the cytoplasm. The protein localises to the perinuclear region. It is found in the P-body. It localises to the stress granule. Its subcellular location is the cell projection. The protein resides in the lamellipodium. The protein localises to the dendrite. It is found in the dendritic spine. It localises to the growth cone. Its subcellular location is the filopodium. The protein resides in the axon. Its function is as follows. RNA-binding factor that recruits target transcripts to cytoplasmic protein-RNA complexes (mRNPs). This transcript 'caging' into mRNPs allows mRNA transport and transient storage. It also modulates the rate and location at which target transcripts encounter the translational apparatus and shields them from endonuclease attacks or microRNA-mediated degradation. Preferentially binds to N6-methyladenosine (m6A)-containing mRNAs and increases their stability. Plays a direct role in the transport and translation of transcripts required for axonal regeneration in adult sensory neurons. Regulates localized beta-actin/ACTB mRNA translation, a crucial process for cell polarity, cell migration and neurite outgrowth. Co-transcriptionally associates with the ACTB mRNA in the nucleus. This binding involves a conserved 54-nucleotide element in the ACTB mRNA 3'-UTR, known as the 'zipcode'. The RNP thus formed is exported to the cytoplasm, binds to a motor protein and is transported along the cytoskeleton to the cell periphery. During transport, prevents ACTB mRNA from being translated into protein. When the RNP complex reaches its destination near the plasma membrane, IGF2BP1 is phosphorylated. This releases the mRNA, allowing ribosomal 40S and 60S subunits to assemble and initiate ACTB protein synthesis. Monomeric ACTB then assembles into the subcortical actin cytoskeleton. During neuronal development, key regulator of neurite outgrowth, growth cone guidance and neuronal cell migration, presumably through the spatiotemporal fine tuning of protein synthesis, such as that of ACTB. May regulate mRNA transport to activated synapses. Binds to and stabilizes ABCB1/MDR-1 mRNA. During interstinal wound repair, interacts with and stabilizes PTGS2 transcript. PTGS2 mRNA stabilization may be crucial for colonic mucosal wound healing. Binds to the 3'-UTR of IGF2 mRNA by a mechanism of cooperative and sequential dimerization and regulates IGF2 mRNA subcellular localization and translation. Binds to MYC mRNA, in the coding region instability determinant (CRD) of the open reading frame (ORF), hence preventing MYC cleavage by endonucleases and possibly microRNA targeting to MYC-CRD. Binding to MYC mRNA is enhanced by m6A-modification of the CRD. Binds to the 3'-UTR of CD44 mRNA and stabilizes it, hence promotes cell adhesion and invadopodia formation in cancer cells. Binds to the oncofetal H19 transcript and to the neuron-specific TAU mRNA and regulates their localizations. Binds to and stabilizes BTRC/FBW1A mRNA. Binds to the adenine-rich autoregulatory sequence (ARS) located in PABPC1 mRNA and represses its translation. PABPC1 mRNA-binding is stimulated by PABPC1 protein. Prevents BTRC/FBW1A mRNA degradation by disrupting microRNA-dependent interaction with AGO2. Promotes the directed movement of tumor-derived cells by fine-tuning intracellular signaling networks. Binds to MAPK4 3'-UTR and inhibits its translation. Interacts with PTEN transcript open reading frame (ORF) and prevents mRNA decay. This combined action on MAPK4 (down-regulation) and PTEN (up-regulation) antagonizes HSPB1 phosphorylation, consequently it prevents G-actin sequestration by phosphorylated HSPB1, allowing F-actin polymerization. Hence enhances the velocity of cell migration and stimulates directed cell migration by PTEN-modulated polarization. Interacts with Hepatitis C virus (HCV) 5'-UTR and 3'-UTR and specifically enhances translation at the HCV IRES, but not 5'-cap-dependent translation, possibly by recruiting eIF3. Interacts with HIV-1 GAG protein and blocks the formation of infectious HIV-1 particles. Reduces HIV-1 assembly by inhibiting viral RNA packaging, as well as assembly and processing of GAG protein on cellular membranes. During cellular stress, such as oxidative stress or heat shock, stabilizes target mRNAs that are recruited to stress granules, including CD44, IGF2, MAPK4, MYC, PTEN, RAPGEF2 and RPS6KA5 transcripts. The sequence is that of Insulin-like growth factor 2 mRNA-binding protein 1 (IGF2BP1) from Homo sapiens (Human).